Here is a 469-residue protein sequence, read N- to C-terminus: MNPNQKIMTIGSVSLIIAAVCFLMQIAILVTTVTLHFKQCECDSPSNNQVKPCEPIIIERNITEIVYLNNTTIEKETCPKLVEYRNWSKPQCKITGFAPFSKDNSIRLSAGGDIWVTREPYVSCDPGKCYQFALGQGTTLDNKHSNDTIHDRIPHRTLLMNELGVPFHLGTRQVCIAWSSSSCHDGKAWLHVCVTGDDKNATASFIYDGRLVDSIGSWSQNILRTQESECVCINGTCTVVMTDGSASGRADTRILFIEEGKIVHISPLSGSAQHVEECSCYPRYPNVRCICRDNWKGSNRPIVDINMKDYSIDSSYVCSGLVGDTPRNDDRSSKSNCRNPNNEKGNHGVKGWAFDNGDDVWMGRTISKDLRSGYETFKVIGGWFTPNSKSQVNRQVIVDSDNRSGYSGIFSVEGKSCINRCFYVELIRGRGQETRVWWTSNSIVVFCGTSGTYGKGSWPDGANINFMPI.

Residues 1–9 (MNPNQKIMT) lie on the Intravirion side of the membrane. A helical transmembrane segment spans residues 10 to 30 (IGSVSLIIAAVCFLMQIAILV). The segment at 11–33 (GSVSLIIAAVCFLMQIAILVTTV) is involved in apical transport and lipid raft association. Topologically, residues 31–469 (TTVTLHFKQC…DGANINFMPI (439 aa)) are virion surface. The tract at residues 36–88 (HFKQCECDSPSNNQVKPCEPIIIERNITEIVYLNNTTIEKETCPKLVEYRNWS) is hypervariable stalk region. N-linked (GlcNAc...) asparagine; by host glycosylation is found at asparagine 61, asparagine 69, asparagine 70, and asparagine 86. The tract at residues 91-469 (QCKITGFAPF…DGANINFMPI (379 aa)) is head of neuraminidase. Cystine bridges form between cysteine 92-cysteine 417, cysteine 124-cysteine 129, cysteine 183-cysteine 230, cysteine 232-cysteine 237, cysteine 278-cysteine 291, cysteine 280-cysteine 289, cysteine 318-cysteine 337, and cysteine 421-cysteine 447. Arginine 118 serves as a coordination point for substrate. N-linked (GlcNAc...) asparagine; by host glycosylation is present at asparagine 146. Aspartate 151 functions as the Proton donor/acceptor in the catalytic mechanism. Residue arginine 152 participates in substrate binding. Asparagine 200 and asparagine 234 each carry an N-linked (GlcNAc...) asparagine; by host glycan. Residue 276-277 (EE) coordinates substrate. Arginine 292 is a binding site for substrate. Residues aspartate 293, glycine 297, and aspartate 324 each coordinate Ca(2+). A disordered region spans residues 323 to 344 (GDTPRNDDRSSKSNCRNPNNEK). The segment covering 334 to 343 (KSNCRNPNNE) has biased composition (polar residues). Arginine 371 contacts substrate. A glycan (N-linked (GlcNAc...) asparagine; by host) is linked at asparagine 402. The Nucleophile role is filled by tyrosine 406.

This sequence belongs to the glycosyl hydrolase 34 family. As to quaternary structure, homotetramer. It depends on Ca(2+) as a cofactor. Post-translationally, N-glycosylated.

It is found in the virion membrane. The protein localises to the host apical cell membrane. It carries out the reaction Hydrolysis of alpha-(2-&gt;3)-, alpha-(2-&gt;6)-, alpha-(2-&gt;8)- glycosidic linkages of terminal sialic acid residues in oligosaccharides, glycoproteins, glycolipids, colominic acid and synthetic substrates.. Inhibited by the neuraminidase inhibitors zanamivir (Relenza) and oseltamivir (Tamiflu). These drugs interfere with the release of progeny virus from infected cells and are effective against all influenza strains. Resistance to neuraminidase inhibitors is quite rare. Its function is as follows. Catalyzes the removal of terminal sialic acid residues from viral and cellular glycoconjugates. Cleaves off the terminal sialic acids on the glycosylated HA during virus budding to facilitate virus release. Additionally helps virus spread through the circulation by further removing sialic acids from the cell surface. These cleavages prevent self-aggregation and ensure the efficient spread of the progeny virus from cell to cell. Otherwise, infection would be limited to one round of replication. Described as a receptor-destroying enzyme because it cleaves a terminal sialic acid from the cellular receptors. May facilitate viral invasion of the upper airways by cleaving the sialic acid moieties on the mucin of the airway epithelial cells. Likely to plays a role in the budding process through its association with lipid rafts during intracellular transport. May additionally display a raft-association independent effect on budding. Plays a role in the determination of host range restriction on replication and virulence. Sialidase activity in late endosome/lysosome traffic seems to enhance virus replication. The protein is Neuraminidase of Influenza A virus (strain A/Swine/Hong Kong/3/1976 H3N2).